The chain runs to 274 residues: Ceramide synthase (274 aa).

The TLC domain occupies A34–W261. The next 4 membrane-spanning stretches (helical) occupy residues F130 to W150, L159 to I179, A194 to A214, and L223 to A243.

As to expression, expressed in testis. Expressed in the retina with higher expression levels in the macular than in the peripheral region.

It is found in the golgi apparatus membrane. Its subcellular location is the endoplasmic reticulum membrane. The enzyme catalyses sphing-4-enine + octadecanoyl-CoA = N-octadecanoylsphing-4-enine + CoA + H(+). The catalysed reaction is eicosanoyl-CoA + sphing-4-enine = N-eicosanoyl-sphing-4-enine + CoA + H(+). It carries out the reaction sphing-4-enine + hexadecanoyl-CoA = N-hexadecanoylsphing-4-enine + CoA + H(+). Involved in ceramide synthesis. This Homo sapiens (Human) protein is Ceramide synthase.